Consider the following 59-residue polypeptide: Eag protein (59 aa).

The sequence is that of Eag protein (eag) from Salmonella phage P22 (Bacteriophage P22).